The primary structure comprises 334 residues: Tryptophan--tRNA ligase (334 aa).

ATP-binding positions include 11–13 (QPS) and 19–20 (GN). The 'HIGH' region signature appears at 12 to 20 (PSGELTIGN). Asp-135 provides a ligand contact to L-tryptophan. Residues 147-149 (GED), Val-186, and 195-199 (KMSKS) each bind ATP. The 'KMSKS' region motif lies at 195–199 (KMSKS).

This sequence belongs to the class-I aminoacyl-tRNA synthetase family. As to quaternary structure, homodimer.

Its subcellular location is the cytoplasm. The catalysed reaction is tRNA(Trp) + L-tryptophan + ATP = L-tryptophyl-tRNA(Trp) + AMP + diphosphate + H(+). In terms of biological role, catalyzes the attachment of tryptophan to tRNA(Trp). The protein is Tryptophan--tRNA ligase of Salmonella typhi.